Reading from the N-terminus, the 144-residue chain is Ribosome maturation factor RimP (144 aa).

The protein belongs to the RimP family.

Its subcellular location is the cytoplasm. In terms of biological role, required for maturation of 30S ribosomal subunits. This chain is Ribosome maturation factor RimP, found in Azoarcus sp. (strain BH72).